A 301-amino-acid chain; its full sequence is Mitochondrial carnitine/acylcarnitine carrier protein (301 aa).

Ala2 carries the N-acetylalanine modification. Residues 2–12 (ADQPKPISPLK) are Cytoplasmic-facing. Solcar repeat units follow at residues 8 to 99 (ISPL…GKKL), 108 to 196 (LSYP…VKNI), and 207 to 293 (LSVP…AMKF). Residues 13 to 31 (NLLAGGFGGVCLVFVGHPL) traverse the membrane as a helical segment. Over 32–73 (DTVKVRLQTQPPSLPGQPPMYSGTFDCFRKTLFREGIRGLYR) the chain is Mitochondrial matrix. Residues 74 to 93 (GMAAPIIGVTPMFAVCFFGF) traverse the membrane as a helical segment. The Cytoplasmic portion of the chain corresponds to 94–112 (GLGKKLQQKHPEDVLSYPQ). Residues 113–131 (LFAAGMLSGIFTTGIMTPG) form a helical membrane-spanning segment. The Mitochondrial matrix portion of the chain corresponds to 132-170 (ERIKCLLQIQASSGETKYTGTLDCAKKLYQEFGIRGIYK). An N6-acetyllysine mark is found at Lys148 and Lys157. Lys170 bears the N6-acetyllysine; alternate mark. Lys170 bears the N6-succinyllysine; alternate mark. The helical transmembrane segment at 171-190 (GTVVTLMRDVPASGMYFMTY) threads the bilayer. Over 191 to 211 (EWVKNIFTPEGKRVSELSVPR) the chain is Cytoplasmic. Residues 212–230 (VLVAGGIAGIFNWAVAIPP) form a helical membrane-spanning segment. At 231–267 (DVLKSRFQTAPPGKYPNGFRDVLRELIPDEGVTSLYK) the chain is on the mitochondrial matrix side. Residues 268–287 (GFNAVMIRAFPANAACFLGF) traverse the membrane as a helical segment. Residues 288–301 (EVAMKFLNWATPNL) lie on the Cytoplasmic side of the membrane.

The protein belongs to the mitochondrial carrier (TC 2.A.29) family.

The protein resides in the mitochondrion inner membrane. The enzyme catalyses O-acetyl-(R)-carnitine(in) + (R)-carnitine(out) = O-acetyl-(R)-carnitine(out) + (R)-carnitine(in). The catalysed reaction is an O-acyl-(R)-carnitine(in) + (R)-carnitine(out) = an O-acyl-(R)-carnitine(out) + (R)-carnitine(in). It carries out the reaction O-propanoyl-(R)-carnitine(in) + (R)-carnitine(out) = O-propanoyl-(R)-carnitine(out) + (R)-carnitine(in). It catalyses the reaction O-hexadecanoyl-(R)-carnitine(in) + (R)-carnitine(out) = O-hexadecanoyl-(R)-carnitine(out) + (R)-carnitine(in). The enzyme catalyses O-octanoyl-(R)-carnitine(in) + (R)-carnitine(out) = O-octanoyl-(R)-carnitine(out) + (R)-carnitine(in). The catalysed reaction is (R)-carnitine(in) = (R)-carnitine(out). In terms of biological role, mediates the electroneutral exchange of acylcarnitines (O-acyl-(R)-carnitine or L-acylcarnitine) of different acyl chain lengths (ranging from O-acetyl-(R)-carnitine to long-chain O-acyl-(R)-carnitines) with free carnitine ((R)-carnitine or L-carnitine) across the mitochondrial inner membrane, via a ping-pong mechanism. Key player in the mitochondrial oxidation pathway, it translocates the fatty acids in the form of acylcarnitines into the mitochondrial matrix, where the carnitine palmitoyltransferase 2 (CPT-2) activates them to undergo fatty acid beta-oxidation. Catalyzes the unidirectional transport (uniport) of carnitine at lower rates than the antiport (exchange). The polypeptide is Mitochondrial carnitine/acylcarnitine carrier protein (SLC25A20) (Macaca fascicularis (Crab-eating macaque)).